Consider the following 423-residue polypeptide: Amino sugar nitrososynthase RubN8 (423 aa).

The protein belongs to the acyl-CoA dehydrogenase family. The cofactor is FAD.

Its pathway is antibiotic biosynthesis. Its function is as follows. Nitrososynthase involved in the biosynthesis of rubradirin, an ansamycin antibiotic. In vitro, catalyzes the double-oxidation of TDP-L-epi-vancosamine to TDP-L-epi-vancosonitrose. In vivo, probably catalyzes the formation of D-rubranitrose, the nitro sugar moiety of rubradirin. The chain is Amino sugar nitrososynthase RubN8 from Streptomyces rubradiris (Streptomyces achromogenes subsp. rubradiris).